We begin with the raw amino-acid sequence, 407 residues long: tRNA-specific 2-thiouridylase MnmA (407 aa).

ATP contacts are provided by residues 20-27 and Leu-46; that span reads AMSGGVDS. Residue Cys-114 is the Nucleophile of the active site. Cys-114 and Cys-210 are joined by a disulfide. Position 138 (Gly-138) interacts with ATP. The tract at residues 160–162 is interaction with tRNA; it reads RDQ. Residue Cys-210 is the Cysteine persulfide intermediate of the active site.

It belongs to the MnmA/TRMU family.

It is found in the cytoplasm. The enzyme catalyses S-sulfanyl-L-cysteinyl-[protein] + uridine(34) in tRNA + AH2 + ATP = 2-thiouridine(34) in tRNA + L-cysteinyl-[protein] + A + AMP + diphosphate + H(+). In terms of biological role, catalyzes the 2-thiolation of uridine at the wobble position (U34) of tRNA, leading to the formation of s(2)U34. The protein is tRNA-specific 2-thiouridylase MnmA of Bartonella tribocorum (strain CIP 105476 / IBS 506).